The primary structure comprises 504 residues: MEKFQGYLEFDGARQQSFLYPLFFREYIYVLAYDHGLNRLNRNRSIFLENADYDKKYSSLIVKRSILRMYEQNRLIIPTKDLNQNPFFGHTNIFYYQIISVLFAVIVEIPFSLRLGSYFEGKKFKKSYNLQSIHSIFPFLEDKLSHFNYVLDVLIPYPIHLEILVQILRYWVKDASSLHFFRFCLYEYCNWKNFDIKKKCILNPRFFLFLYNSHVCEYESIFFFLRKRSSHLRSTSYEVLFERILFYGKVQHFLKVFVNNFPAIPGLLTDPFLHYVRYHGKCILATKDTPLLMNKWKFFFVYLWQCYFSVWFQSQKVNINQLSKDNLEFLGYLSSLRLNPLVVRSQMLENSFIIDNVRIKLDSKIPISSIILSLAKDKFCNVLGHPISKATWTDSSDSDILNRFVRICRNISHYYSGSSKKKNLYRIKYILRLCCVKTLARKHKSTVRAFLKRLGSGLLEEFLTGEDQVLSLIFPRSYYASKRLYRVRIWYLDILYLNDLVNHE.

This sequence belongs to the intron maturase 2 family. MatK subfamily.

The protein localises to the plastid. Its subcellular location is the chloroplast. In terms of biological role, usually encoded in the trnK tRNA gene intron. Probably assists in splicing its own and other chloroplast group II introns. The sequence is that of Maturase K from Pseudoturritis turrita (Tower rock-cress).